Consider the following 157-residue polypeptide: Large ribosomal subunit protein uL11 (157 aa).

It belongs to the universal ribosomal protein uL11 family. As to quaternary structure, part of the ribosomal stalk of the 50S ribosomal subunit. Interacts with L10 and the large rRNA to form the base of the stalk. L10 forms an elongated spine to which L12 dimers bind in a sequential fashion forming a multimeric L10(L12)X complex.

Forms part of the ribosomal stalk which helps the ribosome interact with GTP-bound translation factors. The sequence is that of Large ribosomal subunit protein uL11 from Methanocorpusculum labreanum (strain ATCC 43576 / DSM 4855 / Z).